We begin with the raw amino-acid sequence, 255 residues long: Cytochrome c oxidase subunit 2 (255 aa).

Positions 1 to 16 (MFNLFPPFGANTAIFN) are cleaved as a signal peptide. The Mitochondrial intermembrane segment spans residues 17–43 (DAPQPWQVGFQDGASPTQEGITELHDS). The chain crosses the membrane as a helical span at residues 44–64 (IFFYLVIICFGVLWVLSSVIV). Over 65–80 (NFNSNKSQLVYKYANH) the chain is Mitochondrial matrix. A helical transmembrane segment spans residues 81–101 (GTLIELIWTITPALVLIAIAF). Residues 102-255 (PSFKLLYLMD…KYLAWIDSQA (154 aa)) lie on the Mitochondrial intermembrane side of the membrane. Positions 189, 224, 226, 228, 232, and 235 each coordinate Cu cation. A Mg(2+)-binding site is contributed by Glu226.

It belongs to the cytochrome c oxidase subunit 2 family. Component of the cytochrome c oxidase (complex IV, CIV), a multisubunit enzyme composed of a catalytic core of 3 subunits and several supernumerary subunits. The complex exists as a monomer or a dimer and forms supercomplexes (SCs) in the inner mitochondrial membrane with ubiquinol-cytochrome c oxidoreductase (cytochrome b-c1 complex, complex III, CIII). Requires Cu cation as cofactor.

The protein resides in the mitochondrion inner membrane. It catalyses the reaction 4 Fe(II)-[cytochrome c] + O2 + 8 H(+)(in) = 4 Fe(III)-[cytochrome c] + 2 H2O + 4 H(+)(out). Its function is as follows. Component of the cytochrome c oxidase, the last enzyme in the mitochondrial electron transport chain which drives oxidative phosphorylation. The respiratory chain contains 3 multisubunit complexes succinate dehydrogenase (complex II, CII), ubiquinol-cytochrome c oxidoreductase (cytochrome b-c1 complex, complex III, CIII) and cytochrome c oxidase (complex IV, CIV), that cooperate to transfer electrons derived from NADH and succinate to molecular oxygen, creating an electrochemical gradient over the inner membrane that drives transmembrane transport and the ATP synthase. Cytochrome c oxidase is the component of the respiratory chain that catalyzes the reduction of oxygen to water. Electrons originating from reduced cytochrome c in the intermembrane space (IMS) are transferred via the dinuclear copper A center (CU(A)) of subunit 2 and heme A of subunit 1 to the active site in subunit 1, a binuclear center (BNC) formed by heme A3 and copper B (CU(B)). The BNC reduces molecular oxygen to 2 water molecules using 4 electrons from cytochrome c in the IMS and 4 protons from the mitochondrial matrix. This chain is Cytochrome c oxidase subunit 2 (COX2), found in Mycosarcoma maydis (Corn smut fungus).